The chain runs to 152 residues: Small ribosomal subunit protein uS13 (152 aa).

It belongs to the universal ribosomal protein uS13 family. In terms of assembly, part of the 30S ribosomal subunit. Forms a loose heterodimer with protein S19. Forms two bridges to the 50S subunit in the 70S ribosome.

Functionally, located at the top of the head of the 30S subunit, it contacts several helices of the 16S rRNA. In the 70S ribosome it contacts the 23S rRNA (bridge B1a) and protein L5 of the 50S subunit (bridge B1b), connecting the 2 subunits; these bridges are implicated in subunit movement. In Pyrobaculum aerophilum (strain ATCC 51768 / DSM 7523 / JCM 9630 / CIP 104966 / NBRC 100827 / IM2), this protein is Small ribosomal subunit protein uS13.